The following is a 689-amino-acid chain: Glycine--tRNA ligase beta subunit (689 aa).

It belongs to the class-II aminoacyl-tRNA synthetase family. As to quaternary structure, tetramer of two alpha and two beta subunits.

Its subcellular location is the cytoplasm. It carries out the reaction tRNA(Gly) + glycine + ATP = glycyl-tRNA(Gly) + AMP + diphosphate. The sequence is that of Glycine--tRNA ligase beta subunit from Yersinia pseudotuberculosis serotype O:1b (strain IP 31758).